The following is a 278-amino-acid chain: Glucosamine-6-phosphate deaminase (278 aa).

Aspartate 72 serves as the catalytic Proton acceptor; for enolization step. The active-site For ring-opening step is aspartate 141. The active-site Proton acceptor; for ring-opening step is histidine 143. The active-site For ring-opening step is glutamate 148.

The protein belongs to the glucosamine/galactosamine-6-phosphate isomerase family. As to quaternary structure, homohexamer.

The protein localises to the cytoplasm. It carries out the reaction alpha-D-glucosamine 6-phosphate + H2O = beta-D-fructose 6-phosphate + NH4(+). The protein operates within nucleotide-sugar biosynthesis; UDP-N-acetyl-alpha-D-glucosamine biosynthesis; alpha-D-glucosamine 6-phosphate from D-fructose 6-phosphate: step 1/1. Its function is as follows. Catalyzes the reversible conversion of alpha-D-glucosamine 6-phosphate (GlcN-6P) into beta-D-fructose 6-phosphate (Fru-6P) and ammonium ion, a regulatory reaction step in de novo uridine diphosphate-N-acetyl-alpha-D-glucosamine (UDP-GlcNAc) biosynthesis via hexosamine pathway. The chain is Glucosamine-6-phosphate deaminase (Gnpda1) from Aedes aegypti (Yellowfever mosquito).